We begin with the raw amino-acid sequence, 347 residues long: S-adenosylmethionine:tRNA ribosyltransferase-isomerase (347 aa).

The protein belongs to the QueA family. Monomer.

It is found in the cytoplasm. It carries out the reaction 7-aminomethyl-7-carbaguanosine(34) in tRNA + S-adenosyl-L-methionine = epoxyqueuosine(34) in tRNA + adenine + L-methionine + 2 H(+). It participates in tRNA modification; tRNA-queuosine biosynthesis. Transfers and isomerizes the ribose moiety from AdoMet to the 7-aminomethyl group of 7-deazaguanine (preQ1-tRNA) to give epoxyqueuosine (oQ-tRNA). In Erythrobacter litoralis (strain HTCC2594), this protein is S-adenosylmethionine:tRNA ribosyltransferase-isomerase.